A 122-amino-acid polypeptide reads, in one-letter code: Large ribosomal subunit protein uL18 (122 aa).

The protein belongs to the universal ribosomal protein uL18 family. In terms of assembly, part of the 50S ribosomal subunit; part of the 5S rRNA/L5/L18/L25 subcomplex. Contacts the 5S and 23S rRNAs.

In terms of biological role, this is one of the proteins that bind and probably mediate the attachment of the 5S RNA into the large ribosomal subunit, where it forms part of the central protuberance. This Leptospira biflexa serovar Patoc (strain Patoc 1 / Ames) protein is Large ribosomal subunit protein uL18.